The sequence spans 82 residues: Antitoxin MazE8 (82 aa).

In terms of assembly, forms a complex with cognate toxin MazF8.

Functionally, antitoxin component of a type II toxin-antitoxin (TA) system. Its cognate toxin is MazF8. This is Antitoxin MazE8 (mazE8) from Mycobacterium tuberculosis (strain ATCC 25618 / H37Rv).